A 252-amino-acid chain; its full sequence is NDR1/HIN1-like protein 6 (252 aa).

Residues 1–46 form a disordered region; the sequence is MSQHQKIYPVQDPEAATARPTAPLVPRGSSRSEHGDPSKVPLNQRP. Residues 70-90 form a helical membrane-spanning segment; that stretch reads FCFLLLLVVAVGASIGILYLV. Residues Asn121, Asn154, Asn166, and Asn180 are each glycosylated (N-linked (GlcNAc...) asparagine).

Homodimer. In terms of tissue distribution, highly expressed in seeds and at lower level in roots and senescing leaves. Expressed in leaves and flowers.

The protein resides in the cell membrane. It is found in the cytoplasm. Its subcellular location is the cytosol. Functionally, plays an important role in the abiotic stresses-induced abscisic acid (ABA) signaling and biosynthesis. Acts as a positive regulator of ABA-mediated seed germination inhibition. Functions downstream of ABF2/AREB1, ABF4/AREB2 and ABF3. In Arabidopsis thaliana (Mouse-ear cress), this protein is NDR1/HIN1-like protein 6.